We begin with the raw amino-acid sequence, 403 residues long: MHNFEEELTCPICYSIFEDPRVLPCSHTFCRNCLENILQASGNFYIWRPLRIPLKCPNCRSITEIAPTGIESLPVNFALRAIIEKYQQEDHPDIVTCPEHYRQPLNVYCLLDKKLVCGHCLTIGQHHGHPIDDLQSAYLKEKDTPQKLLEQLTDTHWTDLTHLIEKLKEQKSHSEKMIQGDKEAVLQYFKELNDTLEQKKKSFLTALCDVGNLINQEYTPQIERMKEIREQQLELMALTISLQEESPLKFLEKVDDVRQHVQILKQRPLPEVQPVEIYPRVSKILKEEWSRTEIGQIKNVLIPKMKISPKRMSCSWPGKDEKEVEFLKILNIVVVTLISVILMSILFFNQHIITFLSEITLIWFSEASLSVYQSLSNSLHKVKNILCHIFYLLKEFVWKIVSH.

The RING-type zinc finger occupies Cys-10–Arg-60. The B box-type zinc-finger motif lies at Pro-92–Leu-134. 4 residues coordinate Zn(2+): Cys-97, His-100, Cys-120, and His-126. A coiled-coil region spans residues Leu-163–Ser-246. A helical membrane pass occupies residues Ile-329–Asn-349.

The protein belongs to the TRIM/RBCC family. In terms of assembly, interacts with ECSIT.

The protein resides in the endoplasmic reticulum membrane. The enzyme catalyses S-ubiquitinyl-[E2 ubiquitin-conjugating enzyme]-L-cysteine + [acceptor protein]-L-lysine = [E2 ubiquitin-conjugating enzyme]-L-cysteine + N(6)-ubiquitinyl-[acceptor protein]-L-lysine.. Its pathway is protein modification; protein ubiquitination. E3 ubiquitin ligase involved in different processes such as development and immune response. Serves as a negative regulator for innate immune signaling pathways by suppressing RLR-induced activation of IRF3/7 and NF-kappa-B via interaction with adapter ECSIT. Regulates autophagy through modulating both the transcription and the ubiquitination of BECN1. On the one hand, regulates the transcription of BECN1 through negatively modulating the NF-kappa-B pathway. On the other hand, regulates TRAF6-mediated 'Lys-63'-linked ubiquitination of BECN1, thus affecting the formation of the BECN1-PIK3C3 complex. In addition, mediates 'Lys-48'-linked ubiquitination of TRAF6 and thereby promotes TRAF6 proteasomal degradation. Also acts as a critical regulator for early embryo development from blastocyst stage to gastrula through modulating F-actin assembly and WASH1 'Lys-63'-linked ubiquitination. The polypeptide is Tripartite motif-containing protein 59 (TRIM59) (Homo sapiens (Human)).